A 284-amino-acid chain; its full sequence is Large ribosomal subunit protein uL2 (284 aa).

The tract at residues 232–284 (RGTAMNPVDHPHGGGEGRHNGYIPRTPWGKVTKGLKTRDKRKSNKWIVKDRRK) is disordered. Positions 240–250 (DHPHGGGEGRH) are enriched in basic and acidic residues. Residues 264–284 (KGLKTRDKRKSNKWIVKDRRK) show a composition bias toward basic residues.

The protein belongs to the universal ribosomal protein uL2 family. As to quaternary structure, part of the 50S ribosomal subunit. Forms a bridge to the 30S subunit in the 70S ribosome.

Its function is as follows. One of the primary rRNA binding proteins. Required for association of the 30S and 50S subunits to form the 70S ribosome, for tRNA binding and peptide bond formation. It has been suggested to have peptidyltransferase activity; this is somewhat controversial. Makes several contacts with the 16S rRNA in the 70S ribosome. In Chlamydia abortus (strain DSM 27085 / S26/3) (Chlamydophila abortus), this protein is Large ribosomal subunit protein uL2.